We begin with the raw amino-acid sequence, 359 residues long: MRQILIAVAVAVTVSILLTPVLIRLFTKQGFGHQIREDGPPSHHTKRGTPSMGGVAILAGIWAGYLGAHLAGLAFDGEGIGASGLLVLGLATALGGVGFIDDLIKIRRSRNLGLNKTAKTVGQITSAVLFGVLVLQFRNAAGLTPGSADLSYVREIATVTLAPVLFVLFCVVIVSAWSNAVNFTDGLDGLAAGTMAMVTAAYVLITFWQYRNACVTAPGLGCYNVRDPLDLALIAAATAGACIGFLWWNAAPAKIFMGDTGSLALGGVIAGLSVTSRTEILAVVLGALFVAEITSVVLQILTFRTTGRRMFRMAPFHHHFELVGWAETTVIIRFWLLTAITCGLGVALFYGEWLAAVGA.

10 consecutive transmembrane segments (helical) span residues 3-23 (QILI…PVLI), 55-75 (VAIL…GLAF), 80-100 (IGAS…VGFI), 117-137 (TAKT…VLQF), 156-176 (IATV…IVSA), 187-207 (LDGL…LITF), 231-251 (LALI…WNAA), 255-275 (IFMG…LSVT), 280-300 (ILAV…VLQI), and 334-354 (FWLL…GEWL).

It belongs to the glycosyltransferase 4 family. MraY subfamily. Requires Mg(2+) as cofactor.

The protein resides in the cell membrane. It catalyses the reaction UDP-N-acetyl-alpha-D-muramoyl-L-alanyl-gamma-D-glutamyl-meso-2,6-diaminopimeloyl-D-alanyl-D-alanine + di-trans,octa-cis-undecaprenyl phosphate = di-trans,octa-cis-undecaprenyl diphospho-N-acetyl-alpha-D-muramoyl-L-alanyl-D-glutamyl-meso-2,6-diaminopimeloyl-D-alanyl-D-alanine + UMP. It functions in the pathway cell wall biogenesis; peptidoglycan biosynthesis. Catalyzes the initial step of the lipid cycle reactions in the biosynthesis of the cell wall peptidoglycan: transfers peptidoglycan precursor phospho-MurNAc-pentapeptide from UDP-MurNAc-pentapeptide onto the lipid carrier undecaprenyl phosphate, yielding undecaprenyl-pyrophosphoryl-MurNAc-pentapeptide, known as lipid I. This is Phospho-N-acetylmuramoyl-pentapeptide-transferase from Mycobacterium tuberculosis (strain ATCC 25177 / H37Ra).